Here is a 596-residue protein sequence, read N- to C-terminus: Elongation factor 4 (596 aa).

The region spanning 2–183 (KNIRNFSIIA…AIVRRVPAPD (182 aa)) is the tr-type G domain. Residues 14–19 (DHGKST) and 130–133 (NKID) each bind GTP.

This sequence belongs to the TRAFAC class translation factor GTPase superfamily. Classic translation factor GTPase family. LepA subfamily.

It is found in the cell inner membrane. It carries out the reaction GTP + H2O = GDP + phosphate + H(+). Required for accurate and efficient protein synthesis under certain stress conditions. May act as a fidelity factor of the translation reaction, by catalyzing a one-codon backward translocation of tRNAs on improperly translocated ribosomes. Back-translocation proceeds from a post-translocation (POST) complex to a pre-translocation (PRE) complex, thus giving elongation factor G a second chance to translocate the tRNAs correctly. Binds to ribosomes in a GTP-dependent manner. The polypeptide is Elongation factor 4 (Campylobacter curvus (strain 525.92)).